Here is a 473-residue protein sequence, read N- to C-terminus: MATPARRIPRVRVRGIYATALTKLVIDMGFQVVQPSRIIADRFSLPMLTLPADVTIKDSDNNPSELLIVGYEWAVNIILEKLRDTLPYSFYWRSSLPLHSTVKARVIGLRDNRCIARVGDVEAELLVDRSECIEDREVVGGVVRPGVKPRETPRIVPGARVIGDYAILIESSEPRVTISEHVRSPEKRALLAAIATSFTEQGYAVHWRSSSQHAEREELEKHLRQLREALAEARKRAEEGPPGVYSEGEAVVLVHLSSADKQKLDEIRDSVVATIPYHHTVKSLQPSLSKVIDYAEKVKALGVDSEKLVRALLELVAEDLASRRRIRILHVKPSGEYIELGKAEIKSVYVEDKSLVIVLERTVKSRGVYDGLGVEKEPGDRIVTEVRTDEWIVKHTYYAPDGTVKGTYININTPPEIAEDAIVYLDLEIDIVKKPGKKPKIVDAEELDKYHEQGIVTTKLKEKALEIARKLAG.

Belongs to the FAU-1 family.

Functionally, probable RNase involved in rRNA stability through maturation and/or degradation of precursor rRNAs. Binds to RNA in loop regions with AU-rich sequences. The polypeptide is Probable ribonuclease FAU-1 (Hyperthermus butylicus (strain DSM 5456 / JCM 9403 / PLM1-5)).